Here is a 476-residue protein sequence, read N- to C-terminus: 4-(hydroxymethyl)benzenesulfonate dehydrogenase TsaD1 (476 aa).

NAD(+) is bound by residues 154-155, 178-181, and 230-231; these read WN, KAAE, and GS. Glutamate 252 serves as the catalytic Proton acceptor. Position 253 (leucine 253) interacts with NAD(+). Cysteine 286 acts as the Nucleophile in catalysis. Position 380 (glutamate 380) interacts with NAD(+).

The protein belongs to the aldehyde dehydrogenase family. Homodimer.

It catalyses the reaction 4-(hydroxymethyl)benzenesulfonate + NAD(+) = 4-formylbenzenesulfonate + NADH + H(+). Its function is as follows. Involved in the toluene-4-sulfonate degradation pathway. Does not discriminate between the sulfonate and the carboxyl substituents and can also be involved in the p-toluenecarboxylate degradation pathway. The chain is 4-(hydroxymethyl)benzenesulfonate dehydrogenase TsaD1 (tsaD1) from Comamonas testosteroni (Pseudomonas testosteroni).